Consider the following 901-residue polypeptide: HTH-type transcriptional regulator MalT (901 aa).

ATP is bound at residue 39-46 (SPAGYGKT). In terms of domain architecture, HTH luxR-type spans 829-894 (ELIRTSPLTQ…AAVQHAQKLL (66 aa)). The segment at residues 853–872 (NEQIAGELEVAATTIKTHIR) is a DNA-binding region (H-T-H motif).

This sequence belongs to the MalT family. Monomer in solution. Oligomerizes to an active state in the presence of the positive effectors ATP and maltotriose.

Activated by ATP and maltotriose, which are both required for DNA binding. Its function is as follows. Positively regulates the transcription of the maltose regulon whose gene products are responsible for uptake and catabolism of malto-oligosaccharides. Specifically binds to the promoter region of its target genes, recognizing a short DNA motif called the MalT box. This chain is HTH-type transcriptional regulator MalT, found in Escherichia coli O127:H6 (strain E2348/69 / EPEC).